A 29-amino-acid chain; its full sequence is GDACGETCFTGICFTAGCSCNPWPTCTRN.

The cyclopeptide (Gly-Asn) cross-link spans 1–29 (GDACGETCFTGICFTAGCSCNPWPTCTRN). Cystine bridges form between cysteine 4-cysteine 18, cysteine 8-cysteine 20, and cysteine 13-cysteine 26.

Post-translationally, this is a cyclic peptide. As to expression, expressed in leaf, fruit, pedical and stem but not in root (at protein level).

Functionally, probably participates in a plant defense mechanism. This Chassalia chartacea (Chassalia curviflora) protein is Chassatide C1.